A 318-amino-acid chain; its full sequence is Electron transfer flavoprotein subunit alpha (318 aa).

An FAD-binding site is contributed by 257-285 (LYIALGISGAIQHRAGMQTSKTIVAVNKD).

The protein belongs to the ETF alpha-subunit/FixB family. Heterodimer of an alpha and a beta subunit. FAD is required as a cofactor.

Its function is as follows. The electron transfer flavoprotein serves as a specific electron acceptor for other dehydrogenases. It transfers the electrons to the main respiratory chain via ETF-ubiquinone oxidoreductase (ETF dehydrogenase). The protein is Electron transfer flavoprotein subunit alpha (etfA) of Mycobacterium tuberculosis (strain CDC 1551 / Oshkosh).